We begin with the raw amino-acid sequence, 555 residues long: 4-coumarate--CoA ligase-like 9 (555 aa).

ATP contacts are provided by serine 200, serine 201, glycine 202, threonine 203, threonine 204, and lysine 208. (E)-4-coumaroyl-AMP is bound at residue tyrosine 248. Residue arginine 269 coordinates CoA. The SBD1 stretch occupies residues 271-342; that stretch reads DLRTFLRALV…RKFPGVQVEE (72 aa). (E)-4-coumaroyl-AMP is bound at residue alanine 320. The ATP site is built by glutamate 342, alanine 343, threonine 347, aspartate 431, and arginine 446. Residues alanine 343 and threonine 347 each coordinate (E)-4-coumaroyl-AMP. The segment at 343–410 is SBD2; the sequence is AYGLTEHSCI…VRSQSVMQGY (68 aa). Residues lysine 448 and lysine 452 each contribute to the (E)-4-coumaroyl-AMP site. 2 residues coordinate CoA: lysine 454 and glycine 455. Residue lysine 537 participates in ATP binding.

It belongs to the ATP-dependent AMP-binding enzyme family. As to quaternary structure, interacts with STS1. Mg(2+) serves as cofactor.

It carries out the reaction (E)-4-coumarate + ATP + CoA = (E)-4-coumaroyl-CoA + AMP + diphosphate. It catalyses the reaction (E)-4-coumarate + ATP + H(+) = (E)-4-coumaroyl-AMP + diphosphate. The enzyme catalyses (E)-4-coumaroyl-AMP + CoA = (E)-4-coumaroyl-CoA + AMP + H(+). Its function is as follows. Carboxylate--CoA ligase that may use 4-coumarate as substrate. Follows a two-step reaction mechanism, wherein the carboxylate substrate first undergoes adenylation by ATP, followed by a thioesterification in the presence of CoA to yield the final CoA thioester. This Oryza sativa subsp. japonica (Rice) protein is 4-coumarate--CoA ligase-like 9 (4CLL9).